Here is a 458-residue protein sequence, read N- to C-terminus: Enolase (458 aa).

Q177 serves as a coordination point for (2R)-2-phosphoglycerate. Catalysis depends on E219, which acts as the Proton donor. Mg(2+) contacts are provided by D256, E310, and D337. Positions 362, 391, 392, and 413 each coordinate (2R)-2-phosphoglycerate. Catalysis depends on K362, which acts as the Proton acceptor.

The protein belongs to the enolase family. Mg(2+) serves as cofactor.

It is found in the cytoplasm. The protein resides in the secreted. Its subcellular location is the cell surface. The catalysed reaction is (2R)-2-phosphoglycerate = phosphoenolpyruvate + H2O. The protein operates within carbohydrate degradation; glycolysis; pyruvate from D-glyceraldehyde 3-phosphate: step 4/5. Catalyzes the reversible conversion of 2-phosphoglycerate (2-PG) into phosphoenolpyruvate (PEP). It is essential for the degradation of carbohydrates via glycolysis. The polypeptide is Enolase (Mycoplasma genitalium (strain ATCC 33530 / DSM 19775 / NCTC 10195 / G37) (Mycoplasmoides genitalium)).